The sequence spans 276 residues: Shikimate dehydrogenase (NADP(+)) (276 aa).

Residues 18-20 (SKS) and Thr65 contribute to the shikimate site. Lys69 serves as the catalytic Proton acceptor. An NADP(+)-binding site is contributed by Glu81. Asn90 and Asp106 together coordinate shikimate. NADP(+)-binding positions include 130–134 (GAGGA), 154–159 (NRTSSK), and Met217. A shikimate-binding site is contributed by Tyr219. Residue Gly241 coordinates NADP(+).

It belongs to the shikimate dehydrogenase family. Homodimer.

It catalyses the reaction shikimate + NADP(+) = 3-dehydroshikimate + NADPH + H(+). It functions in the pathway metabolic intermediate biosynthesis; chorismate biosynthesis; chorismate from D-erythrose 4-phosphate and phosphoenolpyruvate: step 4/7. Functionally, involved in the biosynthesis of the chorismate, which leads to the biosynthesis of aromatic amino acids. Catalyzes the reversible NADPH linked reduction of 3-dehydroshikimate (DHSA) to yield shikimate (SA). This Vibrio atlanticus (strain LGP32) (Vibrio splendidus (strain Mel32)) protein is Shikimate dehydrogenase (NADP(+)).